A 469-amino-acid chain; its full sequence is Neuraminidase (469 aa).

The Intravirion segment spans residues 1 to 6 (MNPNQK). A helical transmembrane segment spans residues 7–27 (IITIGSICMVIGIVSLMLQIG). The involved in apical transport and lipid raft association stretch occupies residues 11–33 (GSICMVIGIVSLMLQIGNIISIW). Topologically, residues 28–469 (NIISIWVSHS…GAELPFTIDK (442 aa)) are virion surface. The tract at residues 36-90 (HSIQTGNQHQAEPCNQSIITYENNTWVNQTYVNISNTNFLTEKAVASVTLAGNSS) is hypervariable stalk region. 5 N-linked (GlcNAc...) asparagine; by host glycosylation sites follow: asparagine 50, asparagine 58, asparagine 63, asparagine 68, and asparagine 88. The segment at 91-469 (LCPISGWAVY…GAELPFTIDK (379 aa)) is head of neuraminidase. 8 cysteine pairs are disulfide-bonded: cysteine 92–cysteine 417, cysteine 124–cysteine 129, cysteine 184–cysteine 231, cysteine 233–cysteine 238, cysteine 279–cysteine 292, cysteine 281–cysteine 290, cysteine 318–cysteine 335, and cysteine 421–cysteine 446. Arginine 118 provides a ligand contact to substrate. Asparagine 146 carries an N-linked (GlcNAc...) asparagine; by host glycan. Catalysis depends on aspartate 151, which acts as the Proton donor/acceptor. Substrate is bound at residue arginine 152. N-linked (GlcNAc...) asparagine; by host glycosylation is present at asparagine 235. Position 277–278 (277–278 (EE)) interacts with substrate. Arginine 293 contacts substrate. Ca(2+)-binding residues include aspartate 294, glycine 298, and aspartate 324. Arginine 368 contributes to the substrate binding site. Asparagine 386 carries N-linked (GlcNAc...) asparagine; by host glycosylation. The Nucleophile role is filled by tyrosine 402.

It belongs to the glycosyl hydrolase 34 family. As to quaternary structure, homotetramer. It depends on Ca(2+) as a cofactor. In terms of processing, N-glycosylated.

Its subcellular location is the virion membrane. The protein localises to the host apical cell membrane. The enzyme catalyses Hydrolysis of alpha-(2-&gt;3)-, alpha-(2-&gt;6)-, alpha-(2-&gt;8)- glycosidic linkages of terminal sialic acid residues in oligosaccharides, glycoproteins, glycolipids, colominic acid and synthetic substrates.. Inhibited by the neuraminidase inhibitors zanamivir (Relenza) and oseltamivir (Tamiflu). These drugs interfere with the release of progeny virus from infected cells and are effective against all influenza strains. Resistance to neuraminidase inhibitors is quite rare. Catalyzes the removal of terminal sialic acid residues from viral and cellular glycoconjugates. Cleaves off the terminal sialic acids on the glycosylated HA during virus budding to facilitate virus release. Additionally helps virus spread through the circulation by further removing sialic acids from the cell surface. These cleavages prevent self-aggregation and ensure the efficient spread of the progeny virus from cell to cell. Otherwise, infection would be limited to one round of replication. Described as a receptor-destroying enzyme because it cleaves a terminal sialic acid from the cellular receptors. May facilitate viral invasion of the upper airways by cleaving the sialic acid moieties on the mucin of the airway epithelial cells. Likely to plays a role in the budding process through its association with lipid rafts during intracellular transport. May additionally display a raft-association independent effect on budding. Plays a role in the determination of host range restriction on replication and virulence. Sialidase activity in late endosome/lysosome traffic seems to enhance virus replication. The sequence is that of Neuraminidase from Aves (Cat).